A 288-amino-acid polypeptide reads, in one-letter code: ATP synthase subunit a (288 aa).

The next 6 helical transmembrane spans lie at 47–67, 104–124, 157–177, 199–219, 237–257, and 258–278; these read LDSM…FWLV, LIAP…LMDL, DPNI…YYSI, PIAK…TLIA, LIFV…SVPW, and AIFH…LTIV.

The protein belongs to the ATPase A chain family. In terms of assembly, F-type ATPases have 2 components, CF(1) - the catalytic core - and CF(0) - the membrane proton channel. CF(1) has five subunits: alpha(3), beta(3), gamma(1), delta(1), epsilon(1). CF(0) has three main subunits: a(1), b(2) and c(9-12). The alpha and beta chains form an alternating ring which encloses part of the gamma chain. CF(1) is attached to CF(0) by a central stalk formed by the gamma and epsilon chains, while a peripheral stalk is formed by the delta and b chains.

It localises to the cell inner membrane. In terms of biological role, key component of the proton channel; it plays a direct role in the translocation of protons across the membrane. This is ATP synthase subunit a from Psychrobacter sp. (strain PRwf-1).